The chain runs to 499 residues: Protein-tyrosine sulfotransferase (499 aa).

Topologically, residues 1–9 (MRLPYRNKK) are cytoplasmic. A helical; Signal-anchor for type II membrane protein membrane pass occupies residues 10 to 30 (VTLWVLFGIIVITMFLFKFTE). The Lumenal portion of the chain corresponds to 31-499 (LRPTCLFKVD…NIMEDPMADT (469 aa)). 80-84 (RSGTT) is a binding site for 3'-phosphoadenylyl sulfate. An intrachain disulfide couples Cys-98 to Cys-158. The active-site Proton donor/acceptor is Glu-101. The interaction with peptide substrate stretch occupies residues 103–107 (RVIPR). Arg-185, Ser-193, and Arg-197 together coordinate 3'-phosphoadenylyl sulfate. A disulfide bond links Cys-227 and Cys-235. 3'-phosphoadenylyl sulfate contacts are provided by residues Tyr-240, 287 to 296 (SSDQVIKPVN), and Lys-302. Residues Asn-346 and Asn-380 are each glycosylated (N-linked (GlcNAc...) asparagine). Disordered stretches follow at residues 362–460 (KQVL…QKPK) and 476–499 (NNINNNINNNNNNNNIMEDPMADT). Composition is skewed to low complexity over residues 375 to 400 (TNTIINNSNNKDNNNNQYTINKIIPE) and 408 to 434 (HVQQQHLQQQQQQHLQQQQHQRQQQQQ). The segment covering 443–460 (EREAEPDREQQLLHQKPK) has biased composition (basic and acidic residues). The span at 476–491 (NNINNNINNNNNNNNI) shows a compositional bias: low complexity.

This sequence belongs to the protein sulfotransferase family.

It localises to the golgi apparatus membrane. It catalyses the reaction L-tyrosyl-[protein] + 3'-phosphoadenylyl sulfate = O-sulfo-L-tyrosine-[protein] + adenosine 3',5'-bisphosphate + H(+). Functionally, catalyzes the O-sulfation of tyrosine residues within acidic motifs of polypeptides. Has a role in protein secretion. The polypeptide is Protein-tyrosine sulfotransferase (Drosophila melanogaster (Fruit fly)).